We begin with the raw amino-acid sequence, 553 residues long: Formate--tetrahydrofolate ligase (553 aa).

Residue 56–63 (TPKGEGKT) participates in ATP binding.

Belongs to the formate--tetrahydrofolate ligase family.

The catalysed reaction is (6S)-5,6,7,8-tetrahydrofolate + formate + ATP = (6R)-10-formyltetrahydrofolate + ADP + phosphate. It functions in the pathway one-carbon metabolism; tetrahydrofolate interconversion. This chain is Formate--tetrahydrofolate ligase, found in Haloarcula marismortui (strain ATCC 43049 / DSM 3752 / JCM 8966 / VKM B-1809) (Halobacterium marismortui).